Here is a 154-residue protein sequence, read N- to C-terminus: Fimbrial protein (154 aa).

A propeptide spans 1 to 6 (MKAQKG) (leader sequence). Phe7 bears the N-methylphenylalanine mark. The helical transmembrane segment at 7–27 (FTLIELMIVVAIIGILAAIAI) threads the bilayer. An intrachain disulfide couples Cys133 to Cys151.

Belongs to the N-Me-Phe pilin family. As to quaternary structure, the pili are polar flexible filaments of about 5.4 nanometers diameter and 2.5 micrometers average length; they consist of only a single polypeptide chain arranged in a helical configuration of five subunits per turn in the assembled pilus.

It is found in the fimbrium. Its subcellular location is the membrane. In Pseudomonas aeruginosa, this protein is Fimbrial protein (pilA).